Here is a 193-residue protein sequence, read N- to C-terminus: dCTP deaminase, dUMP-forming (193 aa).

Residues 107–112 (RSSLGR), aspartate 125, 133–135 (TLE), glutamine 154, and tyrosine 168 each bind dCTP. Glutamate 135 (proton donor/acceptor) is an active-site residue. The tract at residues 169–193 (AESSGKYHGDERPSPSKMHLDFCRG) is disordered. Positions 173 to 193 (GKYHGDERPSPSKMHLDFCRG) are enriched in basic and acidic residues.

It belongs to the dCTP deaminase family. In terms of assembly, homotrimer.

It carries out the reaction dCTP + 2 H2O = dUMP + NH4(+) + diphosphate. It functions in the pathway pyrimidine metabolism; dUMP biosynthesis; dUMP from dCTP: step 1/1. Functionally, bifunctional enzyme that catalyzes both the deamination of dCTP to dUTP and the hydrolysis of dUTP to dUMP without releasing the toxic dUTP intermediate. The sequence is that of dCTP deaminase, dUMP-forming from Methanopyrus kandleri (strain AV19 / DSM 6324 / JCM 9639 / NBRC 100938).